The sequence spans 298 residues: NFU1 iron-sulfur cluster scaffold homolog, mitochondrial (298 aa).

Positions 194–262 (IKELLDTRIR…IPEVESVEQV (69 aa)) are nifU. Residues Cys-231 and Cys-234 each contribute to the [4Fe-4S] cluster site.

This sequence belongs to the NifU family.

It localises to the mitochondrion. Its function is as follows. Molecular scaffold for [Fe-S] cluster assembly of mitochondrial iron-sulfur proteins. In Drosophila grimshawi (Hawaiian fruit fly), this protein is NFU1 iron-sulfur cluster scaffold homolog, mitochondrial.